We begin with the raw amino-acid sequence, 20 residues long: Non-secretory ribonuclease (20 aa).

Histidine 16 acts as the Proton acceptor in catalysis.

Belongs to the pancreatic ribonuclease family. In terms of assembly, interacts with and forms a tight 1:1 complex with RNH1. Dimerization of two such complexes may occur.

The protein localises to the lysosome. The protein resides in the cytoplasmic granule. It catalyses the reaction an [RNA] containing cytidine + H2O = an [RNA]-3'-cytidine-3'-phosphate + a 5'-hydroxy-ribonucleotide-3'-[RNA].. The enzyme catalyses an [RNA] containing uridine + H2O = an [RNA]-3'-uridine-3'-phosphate + a 5'-hydroxy-ribonucleotide-3'-[RNA].. Functionally, this is a non-secretory ribonuclease. It is a pyrimidine specific nuclease with a slight preference for U. Cytotoxin and helminthotoxin. Possesses a wide variety of biological activities. This is Non-secretory ribonuclease (RNASE2) from Sus scrofa (Pig).